The primary structure comprises 292 residues: Phosphoribosylaminoimidazole-succinocarboxamide synthase (292 aa).

Belongs to the SAICAR synthetase family.

The enzyme catalyses 5-amino-1-(5-phospho-D-ribosyl)imidazole-4-carboxylate + L-aspartate + ATP = (2S)-2-[5-amino-1-(5-phospho-beta-D-ribosyl)imidazole-4-carboxamido]succinate + ADP + phosphate + 2 H(+). It functions in the pathway purine metabolism; IMP biosynthesis via de novo pathway; 5-amino-1-(5-phospho-D-ribosyl)imidazole-4-carboxamide from 5-amino-1-(5-phospho-D-ribosyl)imidazole-4-carboxylate: step 1/2. This is Phosphoribosylaminoimidazole-succinocarboxamide synthase from Thermodesulfovibrio yellowstonii (strain ATCC 51303 / DSM 11347 / YP87).